We begin with the raw amino-acid sequence, 515 residues long: Maturase K (515 aa).

The protein belongs to the intron maturase 2 family. MatK subfamily.

It localises to the plastid. The protein localises to the chloroplast. Usually encoded in the trnK tRNA gene intron. Probably assists in splicing its own and other chloroplast group II introns. In Pinus banksiana (Jack pine), this protein is Maturase K.